The primary structure comprises 246 residues: Sugar fermentation stimulation protein homolog (246 aa).

It belongs to the SfsA family.

This Prochlorococcus marinus (strain MIT 9312) protein is Sugar fermentation stimulation protein homolog.